A 487-amino-acid polypeptide reads, in one-letter code: Serine/threonine-protein kinase BSK7 (487 aa).

Gly-2 carries the N-myristoyl glycine lipid modification. Residues 59-325 (ENIVSEHGEK…DLETPSHQLM (267 aa)) form the Protein kinase domain. ATP contacts are provided by residues 65–73 (HGEKAPNVV) and Lys-87. Asp-181 (proton acceptor) is an active-site residue.

This sequence belongs to the protein kinase superfamily. Ser/Thr protein kinase family.

Its subcellular location is the cell membrane. It catalyses the reaction L-seryl-[protein] + ATP = O-phospho-L-seryl-[protein] + ADP + H(+). The enzyme catalyses L-threonyl-[protein] + ATP = O-phospho-L-threonyl-[protein] + ADP + H(+). In terms of biological role, probable serine/threonine kinase that acts as a positive regulator of brassinosteroid (BR) signaling downstream of the receptor kinase BRI1. Functions redundantly with BSK3, BSK5, BSK6 and BSK8. In Arabidopsis thaliana (Mouse-ear cress), this protein is Serine/threonine-protein kinase BSK7.